Consider the following 859-residue polypeptide: Protein EFR3 homolog (859 aa).

Disordered regions lie at residues aspartate 638–threonine 657 and arginine 697–tyrosine 724. A compositionally biased stretch (basic and acidic residues) spans tryptophan 704–aspartate 722.

It belongs to the EFR3 family.

The protein is Protein EFR3 homolog of Caenorhabditis briggsae.